The chain runs to 431 residues: Serine/threonine-protein kinase Sgk1 (431 aa).

A disordered region spans residues L58 to A93. Residues Q81–A93 are compositionally biased toward polar residues. The region spanning F98 to F355 is the Protein kinase domain. Residues I104–V112 and K127 contribute to the ATP site. The active-site Proton acceptor is D222. The 76-residue stretch at S356 to L431 folds into the AGC-kinase C-terminal domain.

Belongs to the protein kinase superfamily. AGC Ser/Thr protein kinase family.

Its subcellular location is the cytoplasm. The protein resides in the nucleus. It localises to the endoplasmic reticulum. The enzyme catalyses L-seryl-[protein] + ATP = O-phospho-L-seryl-[protein] + ADP + H(+). It catalyses the reaction L-threonyl-[protein] + ATP = O-phospho-L-threonyl-[protein] + ADP + H(+). Protein kinase that may play an important role in cellular stress response. May be involved in the regulation of processes such as cell survival, neuronal excitability and renal sodium excretion. This is Serine/threonine-protein kinase Sgk1 (sgk1) from Fundulus heteroclitus (Killifish).